A 491-amino-acid polypeptide reads, in one-letter code: Probable cytosol aminopeptidase (491 aa).

Mn(2+) contacts are provided by K263 and D268. Residue K275 is part of the active site. Mn(2+)-binding residues include D286, D345, and E347. The active site involves R349.

Belongs to the peptidase M17 family. Mn(2+) serves as cofactor.

The protein localises to the cytoplasm. It catalyses the reaction Release of an N-terminal amino acid, Xaa-|-Yaa-, in which Xaa is preferably Leu, but may be other amino acids including Pro although not Arg or Lys, and Yaa may be Pro. Amino acid amides and methyl esters are also readily hydrolyzed, but rates on arylamides are exceedingly low.. The enzyme catalyses Release of an N-terminal amino acid, preferentially leucine, but not glutamic or aspartic acids.. In terms of biological role, presumably involved in the processing and regular turnover of intracellular proteins. Catalyzes the removal of unsubstituted N-terminal amino acids from various peptides. This Haemophilus influenzae (strain PittEE) protein is Probable cytosol aminopeptidase.